Here is a 364-residue protein sequence, read N- to C-terminus: Chorismate synthase (364 aa).

A disordered region spans residues 41–60 (MQHDLDRRRPGTSRYTTARR). The NADP(+) site is built by arginine 48 and arginine 54. Residues 125–127 (RSS), 238–239 (NA), glycine 278, 293–297 (KPTSS), and arginine 319 contribute to the FMN site.

Belongs to the chorismate synthase family. In terms of assembly, homotetramer. It depends on FMNH2 as a cofactor.

The enzyme catalyses 5-O-(1-carboxyvinyl)-3-phosphoshikimate = chorismate + phosphate. It participates in metabolic intermediate biosynthesis; chorismate biosynthesis; chorismate from D-erythrose 4-phosphate and phosphoenolpyruvate: step 7/7. Catalyzes the anti-1,4-elimination of the C-3 phosphate and the C-6 proR hydrogen from 5-enolpyruvylshikimate-3-phosphate (EPSP) to yield chorismate, which is the branch point compound that serves as the starting substrate for the three terminal pathways of aromatic amino acid biosynthesis. This reaction introduces a second double bond into the aromatic ring system. The sequence is that of Chorismate synthase from Shewanella baltica (strain OS185).